The following is a 613-amino-acid chain: Xaa-Pro aminopeptidase ApepP (613 aa).

The substrate site is built by R77 and H388. 3 residues coordinate Mn(2+): D408, D419, and H482. Residues H482, H491, and E517 each coordinate substrate. 2 residues coordinate Mn(2+): E517 and E531.

The protein belongs to the peptidase M24B family. Mn(2+) serves as cofactor. As to expression, detected in gut, brain, testes and ovary.

The protein resides in the cytoplasm. The enzyme catalyses Release of any N-terminal amino acid, including proline, that is linked to proline, even from a dipeptide or tripeptide.. Inhibited by the chelating agent EDTA. Divalent metal ions have substrate- and concentration-dependent effects on activity. Activity towards bradykinin is inhibited with increasing Mn(2+) concentration. Activity towards substance P is stimulated by low Mn(2+) concentrations (in the range 10 uM-1 mM) but inhibited by Mn(2+) concentrations in excess of 1 mM. Ca(2+), Mg(2+) and Co(2+) stimulate activity towards substance P at concentrations of 10-100 uM but are inhibitory at concentrations of 1 mM. Zn(2+), Ni(2+) and Cu(2+) strongly inhibit activity towards substance P at concentrations of 1 mM. Functionally, catalyzes the removal of a penultimate prolyl residue from the N-termini of peptides, such as Arg-Pro-Pro. The chain is Xaa-Pro aminopeptidase ApepP from Drosophila melanogaster (Fruit fly).